The chain runs to 225 residues: MQRKIKSYVLRAGRISNRQQQGLDLWLEDYELKFDSPSPWNFAKEFGRHDADTIVEIGFGMGTSLFTMAMNNPQCNYLGIEVHKAGVGSLVADLHEHQITNVRVVVHDAVDVLQTKIPENSLAGVQIFFPDPWHKKRHHKRRLIQSEFIQMLVKKIRPSGFIHCATDWEDYAEHILNVLSSESALFNQQKEGGYSPRPDSRPLTKFEQRGERLGHGVWDLVFIKK.

S-adenosyl-L-methionine-binding residues include E56, E81, D108, and D131. The active site involves D131. Substrate-binding positions include K135, D167, and 204–207 (TKFE).

It belongs to the class I-like SAM-binding methyltransferase superfamily. TrmB family.

The enzyme catalyses guanosine(46) in tRNA + S-adenosyl-L-methionine = N(7)-methylguanosine(46) in tRNA + S-adenosyl-L-homocysteine. It participates in tRNA modification; N(7)-methylguanine-tRNA biosynthesis. Functionally, catalyzes the formation of N(7)-methylguanine at position 46 (m7G46) in tRNA. The chain is tRNA (guanine-N(7)-)-methyltransferase from Legionella pneumophila (strain Corby).